The following is a 31-amino-acid chain: Cyclotide mech-5 (31 aa).

Positions 1-31 (GVIPCGESCVFIPCISSVVGCTCKNKVCYRD) form a cross-link, cyclopeptide (Gly-Asp). Disulfide bonds link C5–C21, C9–C23, and C14–C28.

This is a cyclic peptide. Post-translationally, contains 3 disulfide bonds.

Probably participates in a plant defense mechanism (Potential). Binds to and induces leakage in phospholipd membranes, particularly ones containing 1-palmitoyl-2-oleophosphatidylethanolamine (POPE). The polypeptide is Cyclotide mech-5 (Melicytus chathamicus (Chatham Island mahoe)).